Here is a 522-residue protein sequence, read N- to C-terminus: 3'3'-cGAMP-specific phosphodiesterase 2 (522 aa).

Residues 36 to 160 form the Response regulatory domain; the sequence is CVLLVDDDEQ…QKLRTLLYSM (125 aa). At Asp91 the chain carries 4-aspartylphosphate. Residues 325-522 form the HD-GYP domain; that stretch reads LRETSKELVY…FIAIRASLPD (198 aa). 2 residues coordinate a divalent metal cation: His382 and Asp383. Lys386 serves as the catalytic Proton donor. Residues His411, His437, His438, and Asp466 each coordinate a divalent metal cation.

As to quaternary structure, homodimer. Mn(2+) serves as cofactor.

It carries out the reaction 3',3'-cGAMP + H2O = 5'-pApG-3' + H(+). Functionally, phosphodiesterase (PDE) that catalyzes the hydrolysis of 3'3'-cyclic GMP-AMP (3'3'-cGAMP), leading to linear 5'-pApG. Counteracts the function of the 3'3'-cGAMP synthase DncV, and is involved in the modulation of intracellular 3'3'-cGAMP levels. Enhances bacterial chemotaxis and inhibits intestinal colonization in vivo. Thus exerts a crucial role in regulating bacterial infectivity through catalyzing 3'3'-cGAMP degradation. Is specific for 3'3'-cGAMP since it cannot degrade other cGAMP linkage isomers (3'2'-, 2'3'-, and 2'2'-cGAMPs). Is also able to hydrolyze c-di-GMP but not c-di-AMP. In Vibrio cholerae serotype O1 (strain ATCC 39315 / El Tor Inaba N16961), this protein is 3'3'-cGAMP-specific phosphodiesterase 2.